Consider the following 185-residue polypeptide: dCTP deaminase (185 aa).

DCTP contacts are provided by residues 107–112 (KSTYAR), 131–133 (TLE), Gln152, Tyr166, and Gln176. Catalysis depends on Glu133, which acts as the Proton donor/acceptor.

Belongs to the dCTP deaminase family. As to quaternary structure, homotrimer.

The catalysed reaction is dCTP + H2O + H(+) = dUTP + NH4(+). It participates in pyrimidine metabolism; dUMP biosynthesis; dUMP from dCTP (dUTP route): step 1/2. Catalyzes the deamination of dCTP to dUTP. The protein is dCTP deaminase of Wolbachia pipientis wMel.